We begin with the raw amino-acid sequence, 480 residues long: Aromatic-L-amino-acid decarboxylase (480 aa).

N-acetylmethionine is present on methionine 1. 2 consecutive repeat copies span residues 58–115 and 118–178. Residues 58–178 form a 2 X approximate tandem repeats region; it reads RDIEKIIMPG…AASPELTQAA (121 aa). Threonine 82 provides a ligand contact to substrate. Residues alanine 148 and serine 149 each coordinate pyridoxal 5'-phosphate. Histidine 192 provides a ligand contact to substrate. Pyridoxal 5'-phosphate-binding residues include threonine 246 and asparagine 300. Lysine 303 bears the N6-(pyridoxal phosphate)lysine mark.

This sequence belongs to the group II decarboxylase family. As to quaternary structure, homodimer. Pyridoxal 5'-phosphate serves as cofactor.

It catalyses the reaction L-dopa + H(+) = dopamine + CO2. The enzyme catalyses 5-hydroxy-L-tryptophan + H(+) = serotonin + CO2. It functions in the pathway catecholamine biosynthesis; dopamine biosynthesis; dopamine from L-tyrosine: step 2/2. Its function is as follows. Catalyzes the decarboxylation of L-3,4-dihydroxyphenylalanine (DOPA) to dopamine and L-5-hydroxytryptophan to serotonin. The chain is Aromatic-L-amino-acid decarboxylase from Rattus norvegicus (Rat).